The primary structure comprises 129 residues: Flagellar assembly factor FliW 2 (129 aa).

Belongs to the FliW family. As to quaternary structure, interacts with translational regulator CsrA and flagellin(s).

Its subcellular location is the cytoplasm. In terms of biological role, acts as an anti-CsrA protein, binds CsrA and prevents it from repressing translation of its target genes, one of which is flagellin. Binds to flagellin and participates in the assembly of the flagellum. This Helicobacter pylori (strain J99 / ATCC 700824) (Campylobacter pylori J99) protein is Flagellar assembly factor FliW 2.